Consider the following 242-residue polypeptide: MGRGPSIEGRKNASDAKRGKMFTKIIREISVAARAGGGDPSNNPRLRTAMDKGLSSNMSKDVMERAIKKSTGELEGVEYEEVRYEGYAPGGVAVIVDCLTDNRVRTVADVRHAFSKCGGNMGTEGSVAFMFKRLGVLSFAAGIDEDTLTDAAIEAGADDVVVYPEDGAIDVLTAPDAFAQVRDALVAAGLEPAHAEITFRADNDIAVDGETAVQVRKLLDMLEDLDDVQDVYSNVDQAALGA.

This sequence belongs to the TACO1 family.

Its subcellular location is the cytoplasm. In Xanthomonas euvesicatoria pv. vesicatoria (strain 85-10) (Xanthomonas campestris pv. vesicatoria), this protein is Probable transcriptional regulatory protein XCV3282.